Consider the following 310-residue polypeptide: Nuclear hormone receptor family member nhr-89 (310 aa).

Positions 5 to 79 form a DNA-binding region, nuclear receptor; sequence EGPCRVCHSV…SGMRRDCVRK (75 aa). NR C4-type zinc fingers lie at residues 8–29 and 43–67; these read CRVC…CMSC and CPAN…YNKC. Positions 101–310 constitute an NR LBD domain; the sequence is KLSESYEELL…TLHQKYQIPF (210 aa).

This sequence belongs to the nuclear hormone receptor family.

Its subcellular location is the nucleus. Functionally, orphan nuclear receptor. The protein is Nuclear hormone receptor family member nhr-89 (nhr-89) of Caenorhabditis elegans.